Consider the following 332-residue polypeptide: Fructose-1,6-bisphosphatase class 1 (332 aa).

Mg(2+) contacts are provided by glutamate 89, aspartate 110, leucine 112, and aspartate 113. Substrate contacts are provided by residues 113–116, asparagine 206, tyrosine 239, 257–259, and lysine 269; these read DGSS and YLY. Glutamate 275 provides a ligand contact to Mg(2+).

Belongs to the FBPase class 1 family. As to quaternary structure, homotetramer. Mg(2+) is required as a cofactor.

It localises to the cytoplasm. The enzyme catalyses beta-D-fructose 1,6-bisphosphate + H2O = beta-D-fructose 6-phosphate + phosphate. The protein operates within carbohydrate biosynthesis; gluconeogenesis. The sequence is that of Fructose-1,6-bisphosphatase class 1 from Salmonella gallinarum (strain 287/91 / NCTC 13346).